A 215-amino-acid chain; its full sequence is Ras-like GTP-binding protein RHO1 (215 aa).

A30, V31, G32, K33, T34, and C35 together coordinate GTP. T34 contributes to the Mg(2+) binding site. Short sequence motifs (switch) lie at residues 43–54 (GEIPTAYVPTVF) and 74–93 (DTAGQEEYDRLRPLSYADSD). Residue T52 coordinates Mg(2+). Positions 135 and 166 each coordinate GTP. The disordered stretch occupies residues 194–215 (VTTQAKSQESTQQKKKSKCLLQ). Over residues 195–204 (TTQAKSQEST) the composition is skewed to low complexity. Residues 206-215 (QKKKSKCLLQ) show a composition bias toward basic residues. C212 is subject to Cysteine methyl ester. C212 carries the S-geranylgeranyl cysteine lipid modification. Residues 213 to 215 (LLQ) constitute a propeptide, removed in mature form.

Belongs to the small GTPase superfamily. Rho family. Interacts (GTP-bound form) with formin1 (via GBD/FH3 domain); the interaction activates formin1. Interacts (GTP-bound form) with profilin1. Interacts (GDP-bound form and when prenylated) with RhoGDI. Mg(2+) serves as cofactor.

It localises to the cell membrane. It is found in the cytoplasm. The protein localises to the cytoskeleton. Its subcellular location is the cell projection. The protein resides in the phagocytic cup. It localises to the cytoplasmic vesicle. It is found in the phagosome. It carries out the reaction GTP + H2O = GDP + phosphate + H(+). Regulated by guanine nucleotide exchange factors (GEFs) which promote the exchange of bound GDP for free GTP, GTPase activating proteins (GAPs) which increase the GTP hydrolysis activity and GDP dissociation inhibitors which inhibit the dissociation of the nucleotide from the GTPase. Functionally, small GTPase which cycles between active GTP-bound and inactive GDP-bound states. Involved in actin cytoskeleton remodeling. Regulates phagocytosis by modulating actin cytoskeleton dynamics through the recruitment of formin1 and profilin1 to the phagocytosis nucleation site. The polypeptide is Ras-like GTP-binding protein RHO1 (Entamoeba histolytica (strain ATCC 30459 / HM-1:IMSS / ABRM)).